A 211-amino-acid chain; its full sequence is Ribosomal RNA small subunit methyltransferase G (211 aa).

Residues Gly-76, Leu-81, 127 to 128 (VE), and Arg-142 each bind S-adenosyl-L-methionine.

This sequence belongs to the methyltransferase superfamily. RNA methyltransferase RsmG family.

Its subcellular location is the cytoplasm. It carries out the reaction guanosine(527) in 16S rRNA + S-adenosyl-L-methionine = N(7)-methylguanosine(527) in 16S rRNA + S-adenosyl-L-homocysteine. In terms of biological role, specifically methylates the N7 position of guanine in position 527 of 16S rRNA. This chain is Ribosomal RNA small subunit methyltransferase G, found in Vibrio vulnificus (strain CMCP6).